A 717-amino-acid polypeptide reads, in one-letter code: Polyribonucleotide nucleotidyltransferase (717 aa).

Positions 486 and 492 each coordinate Mg(2+). One can recognise a KH domain in the interval 553-612 (PKIVQLQIDIDKISLVIGSTGKTVKAITDEFEVRVQIEQDGRITLFGTDSLKMQKAKAKI). Positions 622-715 (GEIYDGIVKK…KFGKIELELV (94 aa)) constitute an S1 motif domain. Residues 659–689 (RYGDMRHSRYGSGRHSRYGRDNRNTFGMNPP) are disordered. Over residues 666–675 (SRYGSGRHSR) the composition is skewed to basic residues.

This sequence belongs to the polyribonucleotide nucleotidyltransferase family. The cofactor is Mg(2+).

The protein resides in the cytoplasm. It carries out the reaction RNA(n+1) + phosphate = RNA(n) + a ribonucleoside 5'-diphosphate. Involved in mRNA degradation. Catalyzes the phosphorolysis of single-stranded polyribonucleotides processively in the 3'- to 5'-direction. The polypeptide is Polyribonucleotide nucleotidyltransferase (Borrelia hermsii (strain HS1 / DAH)).